Consider the following 703-residue polypeptide: uncharacterized protein (703 aa).

4 helical membrane passes run 23–43 (IAMS…DFLI), 69–89 (ALSG…AAGG), 143–163 (PVIS…ALEA), and 250–270 (PPEW…PIGL). A PNPLA domain is found at 23–335 (IAMSGAISAG…INNDPFEFVR (313 aa)). The GXSXG motif lies at 72–76 (GASAG). The Nucleophile role is filled by Ser74. Asp322 functions as the Proton acceptor in the catalytic mechanism. The DGA/G signature appears at 322-324 (DGG). Helical transmembrane passes span 357–377 (VIMI…EPPL), 432–452 (ETFS…LEAF), and 644–664 (ILST…APWT).

The protein resides in the cell membrane. This is an uncharacterized protein from Sinorhizobium fredii (strain NBRC 101917 / NGR234).